The primary structure comprises 175 residues: Large ribosomal subunit protein uL10 (175 aa).

The protein belongs to the universal ribosomal protein uL10 family. Part of the ribosomal stalk of the 50S ribosomal subunit. The N-terminus interacts with L11 and the large rRNA to form the base of the stalk. The C-terminus forms an elongated spine to which L12 dimers bind in a sequential fashion forming a multimeric L10(L12)X complex.

Forms part of the ribosomal stalk, playing a central role in the interaction of the ribosome with GTP-bound translation factors. The sequence is that of Large ribosomal subunit protein uL10 from Prochlorococcus marinus (strain NATL1A).